The following is a 451-amino-acid chain: Trigger factor (451 aa).

Residues 163 to 248 (GDIIDMEYTV…IKALYANILP (86 aa)) enclose the PPIase FKBP-type domain.

Belongs to the FKBP-type PPIase family. Tig subfamily.

It localises to the cytoplasm. The enzyme catalyses [protein]-peptidylproline (omega=180) = [protein]-peptidylproline (omega=0). In terms of biological role, involved in protein export. Acts as a chaperone by maintaining the newly synthesized protein in an open conformation. Functions as a peptidyl-prolyl cis-trans isomerase. The polypeptide is Trigger factor (Leptospira interrogans serogroup Icterohaemorrhagiae serovar copenhageni (strain Fiocruz L1-130)).